Consider the following 413-residue polypeptide: Peptidase T (413 aa).

H82 serves as a coordination point for Zn(2+). D84 is an active-site residue. D145 contacts Zn(2+). E179 acts as the Proton acceptor in catalysis. E180, D202, and H384 together coordinate Zn(2+).

This sequence belongs to the peptidase M20B family. The cofactor is Zn(2+).

It is found in the cytoplasm. It catalyses the reaction Release of the N-terminal residue from a tripeptide.. In terms of biological role, cleaves the N-terminal amino acid of tripeptides. This Latilactobacillus sakei subsp. sakei (strain 23K) (Lactobacillus sakei subsp. sakei) protein is Peptidase T.